Consider the following 322-residue polypeptide: Picrinine-N-methytransferase (322 aa).

An SAM motif I region spans residues 103–112 (MLDVGCGLGG). Residues 166-174 (GTFDLVFTI) form an SAM motif II region. The tract at residues 193-202 (VAAPGAPVVI) is SAM motif III.

It belongs to the class I-like SAM-binding methyltransferase superfamily. gTMT family. Homodimer. In terms of tissue distribution, accumulates in tissues actively synthesizing monoterpenoid indole alkaloids (MIAs) (at protein level). Mainly expressed in young leaves, but barely in roots and stems.

The protein localises to the cytoplasm. It is found in the cytosol. The enzyme catalyses picrinine + S-adenosyl-L-methionine = ervincine + S-adenosyl-L-homocysteine + H(+). The protein operates within alkaloid biosynthesis; vindoline biosynthesis. In terms of biological role, S-adenosyl-L-methionine-dependent N-methyltransferase involved in the biosynthesis of biologically active monoterpenoid indole alkaloids (MIAs) natural products including vindoline. Catalyzes the conversion of picrinine to N-methylpicrinine (ervincine). Also accepts, with low efficiency, 21-hydroxycyclolochnericine and norajmaline as substrates. The sequence is that of Picrinine-N-methytransferase from Vinca minor (Common periwinkle).